A 62-amino-acid polypeptide reads, in one-letter code: Large ribosomal subunit protein uL30 (62 aa).

The protein belongs to the universal ribosomal protein uL30 family. As to quaternary structure, part of the 50S ribosomal subunit.

This is Large ribosomal subunit protein uL30 from Herpetosiphon aurantiacus (strain ATCC 23779 / DSM 785 / 114-95).